The primary structure comprises 412 residues: LL-diaminopimelate aminotransferase (412 aa).

The substrate site is built by Tyr15 and Gly42. Pyridoxal 5'-phosphate is bound by residues Tyr72, 108–109 (SK), Tyr132, Asn187, Tyr218, and 246–248 (SFS). The substrate site is built by Lys109, Tyr132, and Asn187. Lys249 carries the N6-(pyridoxal phosphate)lysine modification. Residues Arg257 and Asn292 each contribute to the pyridoxal 5'-phosphate site. Residues Asn292 and Arg388 each coordinate substrate.

Belongs to the class-I pyridoxal-phosphate-dependent aminotransferase family. LL-diaminopimelate aminotransferase subfamily. Homodimer. Pyridoxal 5'-phosphate is required as a cofactor.

The enzyme catalyses (2S,6S)-2,6-diaminopimelate + 2-oxoglutarate = (S)-2,3,4,5-tetrahydrodipicolinate + L-glutamate + H2O + H(+). The protein operates within amino-acid biosynthesis; L-lysine biosynthesis via DAP pathway; LL-2,6-diaminopimelate from (S)-tetrahydrodipicolinate (aminotransferase route): step 1/1. Involved in the synthesis of meso-diaminopimelate (m-DAP or DL-DAP), required for both lysine and peptidoglycan biosynthesis. Catalyzes the direct conversion of tetrahydrodipicolinate to LL-diaminopimelate. This chain is LL-diaminopimelate aminotransferase, found in Synechocystis sp. (strain ATCC 27184 / PCC 6803 / Kazusa).